The primary structure comprises 787 residues: Protein smoothened (787 aa).

Positions 1 to 27 (MAAARPARGPELPLLGLLLLLLLGDPG) are cleaved as a signal peptide. Residues 28 to 233 (RGAASSGNAT…EAEHQDMHSY (206 aa)) lie on the Extracellular side of the membrane. The segment at 30 to 60 (AASSGNATGPGPRSAGGSARRSAAVTGPPPP) is disordered. N-linked (GlcNAc...) asparagine glycosylation occurs at Asn-35. The span at 38 to 53 (GPGPRSAGGSARRSAA) shows a compositional bias: low complexity. 5 cysteine pairs are disulfide-bonded: Cys-64-Cys-178, Cys-70-Cys-134, Cys-78-Cys-127, Cys-118-Cys-154, and Cys-147-Cys-169. Residues 65–181 (GRAAPCEPLR…DRFPEGCTNE (117 aa)) form the FZ domain. Asp-95 contributes to the cholesterol binding site. Asn-188 carries N-linked (GlcNAc...) asparagine glycosylation. Disulfide bonds link Cys-193-Cys-213 and Cys-217-Cys-295. The chain crosses the membrane as a helical span at residues 234-254 (IAAFGAVTGLCTLFTLATFVA). Residues 255–262 (DWRNSNRY) lie on the Cytoplasmic side of the membrane. Residues 263–283 (PAVILFYVNACFFVGSIGWLA) form a helical membrane-spanning segment. Residues 284-314 (QFMDGARREIVCRADGTMRLGEPTSNETLSC) lie on the Extracellular side of the membrane. The N-linked (GlcNAc...) asparagine glycan is linked to Asn-309. A disulfide bond links Cys-314 and Cys-390. A helical membrane pass occupies residues 315 to 335 (VIIFVIVYYALMAGVVWFVVL). At 336 to 358 (TYAWHTSFKALGTTYQPLSGKTS) the chain is on the cytoplasmic side. A helical membrane pass occupies residues 359-379 (YFHLLTWSLPFVLTVAILAVA). At 380–402 (QVDGDSVSGICFVGYKNYRYRAG) the chain is on the extracellular side. Position 394 (Tyr-394) interacts with cholesterol. Residues 403–423 (FVLAPIGLVLIVGGYFLIRGV) traverse the membrane as a helical segment. Topologically, residues 424 to 451 (MTLFSIKSNHPGLLSEKAASKINETMLR) are cytoplasmic. The helical transmembrane segment at 452–472 (LGIFGFLAFGFVLITFSCHFY) threads the bilayer. Topologically, residues 473-524 (DFFNQAEWERSFRDYVLCQANVTIGLPTKQPIPDCEIKNRPSLLVEKINLFA) are extracellular. A disulfide bridge connects residues Cys-490 and Cys-507. A helical transmembrane segment spans residues 525 to 545 (MFGTGIAMSTWVWTKATLLIW). The interaction with BBS5 and BBS7 stretch occupies residues 538-569 (TKATLLIWRRTWCRLTGQSDDEPKRIKKSKMI). Over 546–787 (RRTWCRLTGQ…TELMDADSDF (242 aa)) the chain is Cytoplasmic. Phosphoserine occurs at positions 556, 574, and 590. The tract at residues 570–653 (AKAFSKRHEL…TPVPPEEQAN (84 aa)) is required for interaction with PRKACA. Residues 581–593 (QNPGQELSFSMHT) are interaction with DLG5. Position 593 is a phosphothreonine (Thr-593). 2 positions are modified to phosphoserine: Ser-595 and Ser-638. Phosphothreonine occurs at positions 640 and 644. Ser-662 bears the Phosphoserine mark. Residues 667 to 704 (KRLGRKKKRRKRKKEVCPLAPPPELHPPAPAPSTIPRL) are disordered. Basic residues predominate over residues 668–680 (RLGRKKKRRKRKK). Pro residues predominate over residues 685–699 (LAPPPELHPPAPAPS).

It belongs to the G-protein coupled receptor Fz/Smo family. Homodimer. Interacts (via C-terminus) with protein kinase A catalytic subunit PRKACA; interacts with free PRKACA subunits and the interaction leads to sequestration of PRKACA at the membrane, preventing PRKACA-mediated phosphorylation of GLI transcription factors. Interacts with ARRB2. Interacts with KIF7. Interacts with BBS5 and BBS7; the interactions are indicative for the association of SMO with the BBsome complex to facilitate ciliary localization of SMO. Interacts with DLG5 and SDCBP. Interacts with GAS8/DRC4. Post-translationally, phosphorylation by GRK kinases is required for interaction with protein kinase A catalytic subunit PRKACA.

The protein localises to the cell membrane. Its subcellular location is the cell projection. The protein resides in the cilium. In terms of biological role, g protein-coupled receptor which associates with the patched protein (PTCH) to transduce hedgehog protein signaling. Binding of sonic hedgehog (SHH) to its receptor patched prevents inhibition of smoothened (SMO) by patched. When active, SMO binds to and sequesters protein kinase A catalytic subunit PRKACA at the cell membrane, preventing PRKACA-mediated phosphorylation of GLI transcription factors which releases the GLI proteins from PRKACA-mediated inhibition and allows for transcriptional activation of hedgehog pathway target genes. Required for the accumulation of KIF7, GLI2 and GLI3 in the cilia. Interacts with DLG5 at the ciliary base to induce the accumulation of KIF7 and GLI2 at the ciliary tip for GLI2 activation. In Homo sapiens (Human), this protein is Protein smoothened (SMO).